The primary structure comprises 447 residues: Phospholipase A(1) DAD1, chloroplastic (447 aa).

The N-terminal 46 residues, 1–46 (MRFSLSPVRPHSVVVPSLPKQDVVSYISGTTSNRQCRCVLTLPSPS), are a transit peptide targeting the chloroplast. The short motif at 293-297 (GHSLG) is the GXSXG element. Ser295 (acyl-ester intermediate) is an active-site residue. Catalysis depends on charge relay system residues Asp352 and His418.

The protein belongs to the AB hydrolase superfamily. Lipase family. Expressed in flower buds, but not in leaves or roots. Restricted to the stamen filaments immediately before flower opening.

It localises to the plastid. It is found in the chloroplast. It carries out the reaction a 1,2-diacyl-sn-glycero-3-phosphocholine + H2O = a 2-acyl-sn-glycero-3-phosphocholine + a fatty acid + H(+). The enzyme catalyses 1-hexadecanoyl-2-(9Z,12Z-octadecadienoyl)-sn-glycero-3-phosphocholine + H2O = 2-(9Z,12Z-octadecadienoyl)-sn-glycero-3-phosphocholine + hexadecanoate + H(+). In terms of biological role, sn-1-specific phospholipase that releases free fatty acids from phospholipids. Low activity on galactolipids and triacylglycerols. Catalyzes the initial step of jasmonic acid biosynthesis. Not essential for jasmonate biosynthesis after wounding or upon pathogen infection. The sequence is that of Phospholipase A(1) DAD1, chloroplastic from Arabidopsis thaliana (Mouse-ear cress).